Reading from the N-terminus, the 212-residue chain is Cyclin-dependent kinase inhibitor 3 (212 aa).

Over residues 1 to 12 (MKPPSSIQTSEF) the composition is skewed to polar residues. The disordered stretch occupies residues 1-20 (MKPPSSIQTSEFDSSDEEPI). The segment at 1–34 (MKPPSSIQTSEFDSSDEEPIEDEQTPIHISWLSL) is interaction with CDK2. One can recognise a Tyrosine-protein phosphatase domain in the interval 33 to 201 (SLSRVNCSQF…FRDKLAAHLS (169 aa)). Cysteine 140 serves as the catalytic Phosphocysteine intermediate.

It belongs to the protein-tyrosine phosphatase family. As to quaternary structure, interacts with cyclin-dependent kinases such as CDK1, CDK2 and CDK3. Does not interact with CDK4. Interacts (via C-terminus) with phosphorylated CDK2 (via C-terminal helix). Interacts with MS4A3 (via C-terminus); the interaction enhances CDKN3 enzymatic activity.

It localises to the cytoplasm. The protein resides in the perinuclear region. It carries out the reaction O-phospho-L-tyrosyl-[protein] + H2O = L-tyrosyl-[protein] + phosphate. The enzyme catalyses O-phospho-L-threonyl-[protein] + H2O = L-threonyl-[protein] + phosphate. It catalyses the reaction O-phospho-L-seryl-[protein] + H2O = L-seryl-[protein] + phosphate. Functionally, may play a role in cell cycle regulation. Dual specificity CC phosphatase active toward substrates containing either phosphotyrosine or phosphoserine residues. Dephosphorylates CDK2 at 'Thr-160' in a cyclin-dependent manner. The sequence is that of Cyclin-dependent kinase inhibitor 3 from Homo sapiens (Human).